The chain runs to 38 residues: Large ribosomal subunit protein bL36 (38 aa).

Belongs to the bacterial ribosomal protein bL36 family.

This Buchnera aphidicola subsp. Acyrthosiphon pisum (strain 5A) protein is Large ribosomal subunit protein bL36.